The sequence spans 124 residues: Ribonuclease pancreatic (124 aa).

Substrate-binding residues include lysine 7 and arginine 10. The active-site Proton acceptor is histidine 12. Cystine bridges form between cysteine 26–cysteine 84, cysteine 40–cysteine 95, cysteine 58–cysteine 110, and cysteine 65–cysteine 72. Asparagine 34 carries N-linked (GlcNAc...) asparagine; partial glycosylation. Substrate-binding positions include 41-45 (KPVBT), lysine 66, and arginine 85. Histidine 119 (proton donor) is an active-site residue.

This sequence belongs to the pancreatic ribonuclease family. As to quaternary structure, monomer. Interacts with and forms tight 1:1 complexes with RNH1. Dimerization of two such complexes may occur. Interaction with RNH1 inhibits this protein. In terms of tissue distribution, pancreas.

It localises to the secreted. It catalyses the reaction an [RNA] containing cytidine + H2O = an [RNA]-3'-cytidine-3'-phosphate + a 5'-hydroxy-ribonucleotide-3'-[RNA].. It carries out the reaction an [RNA] containing uridine + H2O = an [RNA]-3'-uridine-3'-phosphate + a 5'-hydroxy-ribonucleotide-3'-[RNA].. Functionally, endonuclease that catalyzes the cleavage of RNA on the 3' side of pyrimidine nucleotides. Acts on single-stranded and double-stranded RNA. This Damaliscus korrigum (Topi) protein is Ribonuclease pancreatic (RNASE1).